We begin with the raw amino-acid sequence, 584 residues long: A-type ATP synthase subunit A (584 aa).

234–241 contacts ATP; the sequence is GPFGSGKT.

This sequence belongs to the ATPase alpha/beta chains family. In terms of assembly, has multiple subunits with at least A(3), B(3), C, D, E, F, H, I and proteolipid K(x).

The protein resides in the cell membrane. The catalysed reaction is ATP + H2O + 4 H(+)(in) = ADP + phosphate + 5 H(+)(out). Its function is as follows. Component of the A-type ATP synthase that produces ATP from ADP in the presence of a proton gradient across the membrane. The A chain is the catalytic subunit. The polypeptide is A-type ATP synthase subunit A (Methanoculleus marisnigri (strain ATCC 35101 / DSM 1498 / JR1)).